Reading from the N-terminus, the 1290-residue chain is DNA-directed RNA polymerase subunit beta' (1290 aa).

Zn(2+) contacts are provided by Cys68, Cys70, Cys83, and Cys86. Asp530, Asp532, and Asp534 together coordinate Mg(2+). The Zn(2+) site is built by Cys909, Cys985, Cys992, and Cys995.

Belongs to the RNA polymerase beta' chain family. As to quaternary structure, the RNAP catalytic core consists of 2 alpha, 1 beta, 1 beta' and 1 omega subunit. When a sigma factor is associated with the core the holoenzyme is formed, which can initiate transcription. It depends on Mg(2+) as a cofactor. Zn(2+) is required as a cofactor.

It carries out the reaction RNA(n) + a ribonucleoside 5'-triphosphate = RNA(n+1) + diphosphate. DNA-dependent RNA polymerase catalyzes the transcription of DNA into RNA using the four ribonucleoside triphosphates as substrates. The protein is DNA-directed RNA polymerase subunit beta' of Mycoplasma pneumoniae (strain ATCC 29342 / M129 / Subtype 1) (Mycoplasmoides pneumoniae).